A 284-amino-acid chain; its full sequence is Diaminopimelate epimerase (284 aa).

Asn-14 and Asn-67 together coordinate substrate. The Proton donor role is filled by Cys-76. Residues 77–78 (GN), Asn-166, Asn-199, and 217–218 (ER) each bind substrate. Cys-226 functions as the Proton acceptor in the catalytic mechanism. 227–228 (GT) is a substrate binding site.

The protein belongs to the diaminopimelate epimerase family. In terms of assembly, homodimer.

Its subcellular location is the cytoplasm. It carries out the reaction (2S,6S)-2,6-diaminopimelate = meso-2,6-diaminopimelate. The protein operates within amino-acid biosynthesis; L-lysine biosynthesis via DAP pathway; DL-2,6-diaminopimelate from LL-2,6-diaminopimelate: step 1/1. Catalyzes the stereoinversion of LL-2,6-diaminopimelate (L,L-DAP) to meso-diaminopimelate (meso-DAP), a precursor of L-lysine and an essential component of the bacterial peptidoglycan. This is Diaminopimelate epimerase from Bacillus pumilus (strain SAFR-032).